A 197-amino-acid chain; its full sequence is Wadjet protein JetB (197 aa).

Component of antiplasmid transformation system Wadjet type I, composed of JetA, JetB, JetC and JetD. Expression of Wadjet type I in B.subtilis (strain BEST7003) reduces the transformation efficiency of plasmid pHCMC05. The protein is Wadjet protein JetB of Bacillus cereus (strain Q1).